A 168-amino-acid polypeptide reads, in one-letter code: ATP synthase subunit b (168 aa).

The helical transmembrane segment at 13–33 (WTFLFQTLNLLVVMGLLYVFL) threads the bilayer.

The protein belongs to the ATPase B chain family. In terms of assembly, F-type ATPases have 2 components, F(1) - the catalytic core - and F(0) - the membrane proton channel. F(1) has five subunits: alpha(3), beta(3), gamma(1), delta(1), epsilon(1). F(0) has three main subunits: a(1), b(2) and c(10-14). The alpha and beta chains form an alternating ring which encloses part of the gamma chain. F(1) is attached to F(0) by a central stalk formed by the gamma and epsilon chains, while a peripheral stalk is formed by the delta and b chains.

It is found in the cell membrane. In terms of biological role, f(1)F(0) ATP synthase produces ATP from ADP in the presence of a proton or sodium gradient. F-type ATPases consist of two structural domains, F(1) containing the extramembraneous catalytic core and F(0) containing the membrane proton channel, linked together by a central stalk and a peripheral stalk. During catalysis, ATP synthesis in the catalytic domain of F(1) is coupled via a rotary mechanism of the central stalk subunits to proton translocation. Functionally, component of the F(0) channel, it forms part of the peripheral stalk, linking F(1) to F(0). In Moorella thermoacetica (strain ATCC 39073 / JCM 9320), this protein is ATP synthase subunit b.